The sequence spans 667 residues: Flavin-dependent halogenase malA (667 aa).

The FAD site is built by His48, Glu70, Ile79, and Ser82. Lys108 is a catalytic residue. Residues Arg144, Val168, Asp399, and Ile412 each contribute to the FAD site. Substrate is bound at residue Glu494. Residues Cys597, Cys600, Cys613, and Cys616 each coordinate Zn(2+). Residues 621–646 (TEPQTAVTFDPPLTAEEEALLYAAWN) form a flexible region region.

It belongs to the flavin-dependent halogenase family. The cofactor is Zn(2+).

The enzyme catalyses (+)-premalbrancheamide + 2 FAD + 2 chloride + 4 H(+) = (+)-malbrancheamide + 2 FADH2. It carries out the reaction (+)-premalbrancheamide + FAD + chloride + 2 H(+) = (+)-malbrancheamide B + FADH2. It catalyses the reaction (+)-premalbrancheamide + FAD + chloride + 2 H(+) = (+)-isomalbrancheamide B + FADH2. The catalysed reaction is (+)-malbrancheamide B + FAD + chloride + 2 H(+) = (+)-malbrancheamide + FADH2. The enzyme catalyses (+)-isomalbrancheamide B + FAD + chloride + 2 H(+) = (+)-malbrancheamide + FADH2. It carries out the reaction (+)-premalbrancheamide + bromide + FAD + 2 H(+) = (+)-malbrancheamide C + FADH2. It catalyses the reaction (+)-premalbrancheamide + bromide + FAD + 2 H(+) = (+)-isomalbrancheamide C + FADH2. The catalysed reaction is (+)-malbrancheamide B + bromide + FAD + 2 H(+) = (+)-malbrancheamide D + FADH2. The enzyme catalyses (+)-isomalbrancheamide B + bromide + FAD + 2 H(+) = (+)-isomalbrancheamide D + FADH2. The protein operates within alkaloid biosynthesis. Its function is as follows. Flavin-dependent halogenase; part of the gene cluster that mediates the biosynthesis of malbrancheamide, a dichlorinated fungal indole alkaloid that belongs to a family of natural products containing a characteristic bicyclo[2.2.2]diazaoctane core. The first step of malbrancheamide biosynthesis involves coupling of L-proline and L-tryptophan by malG, a bimodular NRPS, to produce L-Pro-L-Trp aldehyde through reductive offloading. This compound undergoes spontaneous cyclization and dehydration to give a dienamine which is reverse prenylated at C-2 by malE. The other prenyltransferase present in the cluster, malB, displays modest activity, suggesting that may be a redundant gene in the pathway. Subsequently, a [4+2] Diels-Alder cyclo-addition catalyzed by the bifunctional enzyme malC forms the characteristic bicyclo[2.2.2]diazaoctane ring of premalbrancheamid. Finally, the flavin-dependent halogenase malA catalyzes the iterative dichlorination of the indole ring of premalbrancheamide to yield C-9 monochlorinated malbrancheamide B, C-8 monochlorinated isomalbrancheamide B, and dichlorinated malbrancheamide. MalA is also able to brominate premalbrancheamide at C-9 to yield malbrancheamide C, and, to a lesser extend, at C-8 to yield isomalbrancheamide C. Finally, malA can brominate C-9 monochlorinated malbrancheamide B at C-8 to yield malbrancheamide D, or C-8 monochlorinated isomalbrancheamide B at C-9 to produce isomalbrancheamide D. The sequence is that of Flavin-dependent halogenase malA from Malbranchea aurantiaca.